A 333-amino-acid polypeptide reads, in one-letter code: Phosphoribosylformylglycinamidine cyclo-ligase (333 aa).

It belongs to the AIR synthase family.

It is found in the cytoplasm. It catalyses the reaction 2-formamido-N(1)-(5-O-phospho-beta-D-ribosyl)acetamidine + ATP = 5-amino-1-(5-phospho-beta-D-ribosyl)imidazole + ADP + phosphate + H(+). Its pathway is purine metabolism; IMP biosynthesis via de novo pathway; 5-amino-1-(5-phospho-D-ribosyl)imidazole from N(2)-formyl-N(1)-(5-phospho-D-ribosyl)glycinamide: step 2/2. This Methanococcoides burtonii (strain DSM 6242 / NBRC 107633 / OCM 468 / ACE-M) protein is Phosphoribosylformylglycinamidine cyclo-ligase.